Here is a 250-residue protein sequence, read N- to C-terminus: Glutamate racemase (250 aa).

Residues 7–8 and 39–40 contribute to the substrate site; these read DS and YG. Cys-70 serves as the catalytic Proton donor/acceptor. 71–72 contacts substrate; that stretch reads NT. Residue Cys-180 is the Proton donor/acceptor of the active site. 181–182 provides a ligand contact to substrate; that stretch reads TH.

It belongs to the aspartate/glutamate racemases family.

The catalysed reaction is L-glutamate = D-glutamate. Its pathway is cell wall biogenesis; peptidoglycan biosynthesis. In terms of biological role, provides the (R)-glutamate required for cell wall biosynthesis. The polypeptide is Glutamate racemase (Campylobacter jejuni subsp. jejuni serotype O:2 (strain ATCC 700819 / NCTC 11168)).